Here is a 616-residue protein sequence, read N- to C-terminus: Ectonucleoside triphosphate diphosphohydrolase 4 (616 aa).

Residues 1–33 lie on the Cytoplasmic side of the membrane; the sequence is MGRIGISCLFPASWHFSISPVGCPRILNTNLRQ. A helical membrane pass occupies residues 34 to 54; sequence IMVISVLAAAVSLLYFSVVII. The Lumenal segment spans residues 55–559; the sequence is RNKYGRLTRD…ASHTHWRGVS (505 aa). The Proton acceptor role is filled by glutamate 222. Cysteine 368 and cysteine 395 are joined by a disulfide. 2 N-linked (GlcNAc...) asparagine glycosylation sites follow: asparagine 404 and asparagine 407. An intrachain disulfide couples cysteine 461 to cysteine 490. Residues 560 to 580 traverse the membrane as a helical segment; the sequence is FVYNHYLFSGCFLVVLLAILL. The Cytoplasmic segment spans residues 581 to 616; sequence YLLRLRRIHRRTPRSSSAAALWMEEGLPAQNAPGTL.

It belongs to the GDA1/CD39 NTPase family. Ca(2+) is required as a cofactor. Requires Mg(2+) as cofactor. Ubiquitous. Highest expression in testis and lowest in bladder.

The protein resides in the cytoplasmic vesicle. Its subcellular location is the autophagosome membrane. The protein localises to the lysosome membrane. It localises to the golgi apparatus membrane. It carries out the reaction a ribonucleoside 5'-diphosphate + H2O = a ribonucleoside 5'-phosphate + phosphate + H(+). The enzyme catalyses a ribonucleoside 5'-triphosphate + H2O = a ribonucleoside 5'-diphosphate + phosphate + H(+). The catalysed reaction is UDP + H2O = UMP + phosphate + H(+). It catalyses the reaction UTP + H2O = UDP + phosphate + H(+). It carries out the reaction CTP + H2O = CDP + phosphate + H(+). The enzyme catalyses GDP + H2O = GMP + phosphate + H(+). The catalysed reaction is GTP + H2O = GDP + phosphate + H(+). It catalyses the reaction 5-methyl-UTP + H2O = 5-methyl-UDP + phosphate + H(+). Functionally, catalyzes the hydrolysis of nucleoside triphosphates and diphosphates in a calcium- or magnesium-dependent manner, with a preference for pyrimidines. Preferentially hydrolyzes UTP and TTP. AMP, ADP, ATP and UMP are not substrates. Preferentially activated by Ca(2+) over Mg(2+). Its function is as follows. Has a broad substrate specificity with the ability of cleaving all nucleotide di- and triphosphates with the exception of adenosine di- and triphosphate (ADP and ATP). Preferentially hydrolyzes CTP, UDP, CDP, GTP and GDP. Can use either Ca(2+) or Mg(2+) equally. The chain is Ectonucleoside triphosphate diphosphohydrolase 4 from Homo sapiens (Human).